Reading from the N-terminus, the 306-residue chain is Glutaminase (306 aa).

Positions 64, 115, 159, 166, 190, 242, and 260 each coordinate substrate.

The protein belongs to the glutaminase family. As to quaternary structure, homotetramer.

It catalyses the reaction L-glutamine + H2O = L-glutamate + NH4(+). The sequence is that of Glutaminase from Vibrio cholerae serotype O1 (strain ATCC 39315 / El Tor Inaba N16961).